Consider the following 421-residue polypeptide: Imidazolonepropionase (421 aa).

Fe(3+) is bound by residues His81 and His83. Positions 81 and 83 each coordinate Zn(2+). Residues Arg90, Tyr153, and His186 each contribute to the 4-imidazolone-5-propanoate site. Tyr153 lines the N-formimidoyl-L-glutamate pocket. A Fe(3+)-binding site is contributed by His251. His251 contributes to the Zn(2+) binding site. Glu254 provides a ligand contact to 4-imidazolone-5-propanoate. A Fe(3+)-binding site is contributed by Asp326. Residue Asp326 participates in Zn(2+) binding. The N-formimidoyl-L-glutamate site is built by Asn328 and Gly330. Ser331 provides a ligand contact to 4-imidazolone-5-propanoate.

It belongs to the metallo-dependent hydrolases superfamily. HutI family. Zn(2+) is required as a cofactor. The cofactor is Fe(3+).

The protein resides in the cytoplasm. The enzyme catalyses 4-imidazolone-5-propanoate + H2O = N-formimidoyl-L-glutamate. Its pathway is amino-acid degradation; L-histidine degradation into L-glutamate; N-formimidoyl-L-glutamate from L-histidine: step 3/3. Its function is as follows. Catalyzes the hydrolytic cleavage of the carbon-nitrogen bond in imidazolone-5-propanoate to yield N-formimidoyl-L-glutamate. It is the third step in the universal histidine degradation pathway. The polypeptide is Imidazolonepropionase (Streptococcus pyogenes serotype M12 (strain MGAS2096)).